Consider the following 228-residue polypeptide: DNA-3-methyladenine glycosylase 1 (228 aa).

The Proton acceptor role is filled by aspartate 170.

This sequence belongs to the alkylbase DNA glycosidase AlkA family.

The enzyme catalyses Hydrolysis of alkylated DNA, releasing 3-methyladenine, 3-methylguanine, 7-methylguanine and 7-methyladenine.. Functionally, hydrolysis of the deoxyribose N-glycosidic bond to excise 3-methyladenine or 7-methyladenine from the damaged DNA polymer formed by alkylation lesions. Can release ethylated and propylated bases from DNA in addition to 3-methyladenine. This is DNA-3-methyladenine glycosylase 1 (mag1) from Schizosaccharomyces pombe (strain 972 / ATCC 24843) (Fission yeast).